The following is a 181-amino-acid chain: Large ribosomal subunit protein uL5 (181 aa).

The protein belongs to the universal ribosomal protein uL5 family. As to quaternary structure, part of the 50S ribosomal subunit; part of the 5S rRNA/L5/L18/L25 subcomplex. Contacts the 5S rRNA and the P site tRNA. Forms a bridge to the 30S subunit in the 70S ribosome.

In terms of biological role, this is one of the proteins that bind and probably mediate the attachment of the 5S RNA into the large ribosomal subunit, where it forms part of the central protuberance. In the 70S ribosome it contacts protein S13 of the 30S subunit (bridge B1b), connecting the 2 subunits; this bridge is implicated in subunit movement. Contacts the P site tRNA; the 5S rRNA and some of its associated proteins might help stabilize positioning of ribosome-bound tRNAs. The polypeptide is Large ribosomal subunit protein uL5 (Nitrosococcus oceani (strain ATCC 19707 / BCRC 17464 / JCM 30415 / NCIMB 11848 / C-107)).